We begin with the raw amino-acid sequence, 245 residues long: Orotidine 5'-phosphate decarboxylase (245 aa).

Substrate is bound by residues D22, K44, 71–80 (DLKFHDIPNT), T131, R192, Q201, G221, and R222. The Proton donor role is filled by K73.

This sequence belongs to the OMP decarboxylase family. Type 1 subfamily. As to quaternary structure, homodimer.

The catalysed reaction is orotidine 5'-phosphate + H(+) = UMP + CO2. It participates in pyrimidine metabolism; UMP biosynthesis via de novo pathway; UMP from orotate: step 2/2. Its function is as follows. Catalyzes the decarboxylation of orotidine 5'-monophosphate (OMP) to uridine 5'-monophosphate (UMP). The chain is Orotidine 5'-phosphate decarboxylase from Salmonella gallinarum (strain 287/91 / NCTC 13346).